The primary structure comprises 166 residues: NAD(P)H-quinone oxidoreductase subunit I, chloroplastic (166 aa).

4Fe-4S ferredoxin-type domains follow at residues 55 to 84 and 95 to 124; these read GRIH…VDWK and LNYS…MTEE. Residues Cys64, Cys67, Cys70, Cys74, Cys104, Cys107, Cys110, and Cys114 each contribute to the [4Fe-4S] cluster site.

It belongs to the complex I 23 kDa subunit family. NDH is composed of at least 16 different subunits, 5 of which are encoded in the nucleus. [4Fe-4S] cluster is required as a cofactor.

It is found in the plastid. The protein resides in the chloroplast thylakoid membrane. It catalyses the reaction a plastoquinone + NADH + (n+1) H(+)(in) = a plastoquinol + NAD(+) + n H(+)(out). It carries out the reaction a plastoquinone + NADPH + (n+1) H(+)(in) = a plastoquinol + NADP(+) + n H(+)(out). NDH shuttles electrons from NAD(P)H:plastoquinone, via FMN and iron-sulfur (Fe-S) centers, to quinones in the photosynthetic chain and possibly in a chloroplast respiratory chain. The immediate electron acceptor for the enzyme in this species is believed to be plastoquinone. Couples the redox reaction to proton translocation, and thus conserves the redox energy in a proton gradient. This chain is NAD(P)H-quinone oxidoreductase subunit I, chloroplastic, found in Espeletia timotensis (Andean giant rosette).